We begin with the raw amino-acid sequence, 208 residues long: Ubiquitin-conjugating enzyme E2 S (208 aa).

Positions glutamine 14–glutamine 160 constitute a UBC core domain. Cysteine 98 acts as the Glycyl thioester intermediate in catalysis. The tract at residues alanine 159–leucine 208 is disordered. The span at aspartate 170–leucine 198 shows a compositional bias: basic and acidic residues. Residues lysine 199–leucine 208 show a composition bias toward basic residues.

This sequence belongs to the ubiquitin-conjugating enzyme family.

The catalysed reaction is S-ubiquitinyl-[E1 ubiquitin-activating enzyme]-L-cysteine + [E2 ubiquitin-conjugating enzyme]-L-cysteine = [E1 ubiquitin-activating enzyme]-L-cysteine + S-ubiquitinyl-[E2 ubiquitin-conjugating enzyme]-L-cysteine.. It participates in protein modification; protein ubiquitination. Its function is as follows. Catalyzes the covalent attachment of ubiquitin to other proteins. Acts as an essential factor of the anaphase promoting complex/cyclosome (APC/C), a cell cycle-regulated ubiquitin ligase that controls progression through mitosis. Acts by specifically elongating polyubiquitin chains initiated by the E2 enzyme vih/UbcH10 on APC/C substrates, enhancing the degradation of APC/C substrates by the proteasome and promoting mitotic exit. The polypeptide is Ubiquitin-conjugating enzyme E2 S (Drosophila willistoni (Fruit fly)).